Reading from the N-terminus, the 178-residue chain is ATP synthase subunit delta (178 aa).

It belongs to the ATPase delta chain family. In terms of assembly, F-type ATPases have 2 components, F(1) - the catalytic core - and F(0) - the membrane proton channel. F(1) has five subunits: alpha(3), beta(3), gamma(1), delta(1), epsilon(1). F(0) has three main subunits: a(1), b(2) and c(10-14). The alpha and beta chains form an alternating ring which encloses part of the gamma chain. F(1) is attached to F(0) by a central stalk formed by the gamma and epsilon chains, while a peripheral stalk is formed by the delta and b chains.

The protein localises to the cell inner membrane. Functionally, f(1)F(0) ATP synthase produces ATP from ADP in the presence of a proton or sodium gradient. F-type ATPases consist of two structural domains, F(1) containing the extramembraneous catalytic core and F(0) containing the membrane proton channel, linked together by a central stalk and a peripheral stalk. During catalysis, ATP synthesis in the catalytic domain of F(1) is coupled via a rotary mechanism of the central stalk subunits to proton translocation. This protein is part of the stalk that links CF(0) to CF(1). It either transmits conformational changes from CF(0) to CF(1) or is implicated in proton conduction. The polypeptide is ATP synthase subunit delta (Teredinibacter turnerae (strain ATCC 39867 / T7901)).